A 146-amino-acid chain; its full sequence is 3-dehydroquinate dehydratase (146 aa).

Tyrosine 22 functions as the Proton acceptor in the catalytic mechanism. The substrate site is built by asparagine 73, histidine 79, and aspartate 86. Residue histidine 99 is the Proton donor of the active site. Residues 100–101 and arginine 110 each bind substrate; that span reads IS.

The protein belongs to the type-II 3-dehydroquinase family. In terms of assembly, homododecamer.

The enzyme catalyses 3-dehydroquinate = 3-dehydroshikimate + H2O. It participates in metabolic intermediate biosynthesis; chorismate biosynthesis; chorismate from D-erythrose 4-phosphate and phosphoenolpyruvate: step 3/7. Its function is as follows. Catalyzes a trans-dehydration via an enolate intermediate. The protein is 3-dehydroquinate dehydratase of Prochlorococcus marinus subsp. pastoris (strain CCMP1986 / NIES-2087 / MED4).